Consider the following 2211-residue polypeptide: Norsolorinic acid synthase stcA (2211 aa).

The segment at 11–251 (FLFGDQTYDF…REIPIYVPAH (241 aa)) is starter unit:ACP transacylase (SAT) domain. A disordered region spans residues 358-378 (PAEPPTSINKTPERYSHRPGS). Residues 368 to 378 (TPERYSHRPGS) are compositionally biased toward basic and acidic residues. A Ketosynthase family 3 (KS3) domain is found at 380-812 (RGKLAIVSMS…GGNTAVLVED (433 aa)). Residues Cys552, His687, and His730 each act as for beta-ketoacyl synthase activity in the active site. The segment at 912–1201 (IACSGQGSQY…MAGMIKTTLD (290 aa)) is malonyl-CoA:ACP transacylase (MAT) domain. Ser1004 (for acyl/malonyl transferase activity) is an active-site residue. The segment at 1289-1316 (TATSDYQLPSDEQVAAKRPSKQDESKEA) is disordered. The interval 1327–1468 (HRVVEEKTEP…CTVRFTSEAQ (142 aa)) is N-terminal hotdog fold. The region spanning 1327–1643 (HRVVEEKTEP…LRRVPRRGLR (317 aa)) is the PKS/mFAS DH domain. A product template (PT) domain region spans residues 1340 to 1643 (TLVVETDISR…LRRVPRRGLR (304 aa)). Catalysis depends on His1359, which acts as the Proton acceptor; for dehydratase activity. A C-terminal hotdog fold region spans residues 1495 to 1643 (FIRYTTKSGY…LRRVPRRGLR (149 aa)). The active-site Proton donor; for dehydratase activity is the Asp1555. A disordered region spans residues 1655–1706 (RLHGNQQAVKTQAPQRAALKQKPQSSPTQPHASKVAYSRSATSPTAGKPVVA). Composition is skewed to polar residues over residues 1658-1668 (GNQQAVKTQAP) and 1676-1685 (KPQSSPTQPH). 2 consecutive Carrier domains span residues 1712 to 1791 (REGD…SGSA) and 1839 to 1915 (DELF…GTTS). O-(pantetheine 4'-phosphoryl)serine occurs at positions 1749 and 1873. Over residues 1912-1926 (GTTSGSTTGSSGSGS) the composition is skewed to low complexity. Positions 1912–1947 (GTTSGSTTGSSGSGSSEDETDSIPSTPEEYTTADTR) are disordered. Residues 1934 to 1945 (IPSTPEEYTTAD) are compositionally biased toward polar residues. The interval 1969 to 2205 (ILFMLPDGGG…KEHVYLVREL (237 aa)) is thioesterase/Claisen cyclase (TE/CLC) domain. Catalysis depends on Ser2039, which acts as the For thioesterase activity.

Pantetheine 4'-phosphate is required as a cofactor.

It catalyses the reaction hexanoyl-[ACP] + 7 malonyl-CoA + 6 H(+) = noranthrone + holo-[ACP] + 7 CO2 + 7 CoA + 2 H2O. The protein operates within mycotoxin biosynthesis; sterigmatocystin biosynthesis. Functionally, non-reducing polyketide synthase; part of the gene cluster that mediates the biosynthesis of sterigmatocystin (ST), a polyketide-derived furanocoumarin which is part of the most toxic and carcinogenic compounds among the known mycotoxins. The first step in the biosynthesis of sterigmatocystin is the production of hexanoate by the fatty acid synthase (FAS) units stcJ and stcK. The polyketide backbone is assembled by the non-reducing polyketide synthase stcA by condensation of the starter hexanoyl-CoA and 7 malonyl-CoA extender units followed by cyclization and release of norsolorinic acid. Norsolorinic acid is the first stable intermediate in the biosynthesis of sterigmatocystin and is converted into averantin (AVN) by the ketoreductase stcE which reduces the hexanoate ketone to an alcohol. Averantin is then oxidized into 5'-hydroxyaverantin (HAVN) by the cytochrome P450 monooxygenase stcF. 5'-hydroxyaverantin is further converted to 5'-oxyaverantin (OAVN) by the 5'-hydroxyaverantin dehydrogenase stcG. The next step is the conversion of OAVN into averufin (AVF) which is catalyzed by a yet to be identified enzyme. The cytochrome P450 monooxygenase stcB and the flavin-binding monooxygenase stcW are both required for the conversion of averufin to 1-hydroxyversicolorone. The esterase stcI probably catalyzes the formation of versiconal hemiacetal acetate from 1-hydroxyversicolorone. The oxydoreductase stcN then probably catalyzes the biosynthetic step from versiconal to versicolorin B (VERB). The next step is performed by the versicolorin B desaturase stcL to produce versicolorin A (VERA). The ketoreductase stcU and the cytochrome P450 monooxygenase stcS are involved in the conversion of versicolorin A to demethylsterigmatocystin. The Baeyer-Villiger oxidas stcQ and the reductase stcR might be involved in the biosynthetic step from versicolorin A to demethylsterigmatocystin. The final step in the biosynthesis of sterigmatocystin is the methylation of demethylsterigmatocystin catalyzed by the methyltransferase stcP. In Emericella nidulans (strain FGSC A4 / ATCC 38163 / CBS 112.46 / NRRL 194 / M139) (Aspergillus nidulans), this protein is Norsolorinic acid synthase stcA.